The following is a 179-amino-acid chain: UPF0227 protein Ssed_2836 (179 aa).

The protein belongs to the UPF0227 family.

In Shewanella sediminis (strain HAW-EB3), this protein is UPF0227 protein Ssed_2836.